A 221-amino-acid chain; its full sequence is Peptide methionine sulfoxide reductase MsrA (221 aa).

Cys-54 is an active-site residue.

It belongs to the MsrA Met sulfoxide reductase family.

It catalyses the reaction L-methionyl-[protein] + [thioredoxin]-disulfide + H2O = L-methionyl-(S)-S-oxide-[protein] + [thioredoxin]-dithiol. The enzyme catalyses [thioredoxin]-disulfide + L-methionine + H2O = L-methionine (S)-S-oxide + [thioredoxin]-dithiol. Functionally, has an important function as a repair enzyme for proteins that have been inactivated by oxidation. Catalyzes the reversible oxidation-reduction of methionine sulfoxide in proteins to methionine. This chain is Peptide methionine sulfoxide reductase MsrA, found in Methylobacterium sp. (strain 4-46).